The sequence spans 238 residues: Large ribosomal subunit protein uL1 (238 aa).

It belongs to the universal ribosomal protein uL1 family. As to quaternary structure, part of the 50S ribosomal subunit.

Functionally, binds directly to 23S rRNA. The L1 stalk is quite mobile in the ribosome, and is involved in E site tRNA release. Its function is as follows. Protein L1 is also a translational repressor protein, it controls the translation of the L11 operon by binding to its mRNA. In Beutenbergia cavernae (strain ATCC BAA-8 / DSM 12333 / CCUG 43141 / JCM 11478 / NBRC 16432 / NCIMB 13614 / HKI 0122), this protein is Large ribosomal subunit protein uL1.